The following is a 259-amino-acid chain: Phosphatidylglycerol--prolipoprotein diacylglyceryl transferase (259 aa).

The next 4 helical transmembrane spans lie at 12–32, 46–66, 83–103, and 109–129; these read LSLH…VYLA, IIDF…IYYV, IWNG…VLFV, and VLNP…AQAI. Arginine 131 is an a 1,2-diacyl-sn-glycero-3-phospho-(1'-sn-glycerol) binding site. 3 helical membrane passes run 167–187, 194–214, and 226–246; these read VPTF…IMVW, LVDG…RLVI, and GIRV…VFIF.

It belongs to the Lgt family.

It is found in the cell membrane. The enzyme catalyses L-cysteinyl-[prolipoprotein] + a 1,2-diacyl-sn-glycero-3-phospho-(1'-sn-glycerol) = an S-1,2-diacyl-sn-glyceryl-L-cysteinyl-[prolipoprotein] + sn-glycerol 1-phosphate + H(+). The protein operates within protein modification; lipoprotein biosynthesis (diacylglyceryl transfer). Catalyzes the transfer of the diacylglyceryl group from phosphatidylglycerol to the sulfhydryl group of the N-terminal cysteine of a prolipoprotein, the first step in the formation of mature lipoproteins. The protein is Phosphatidylglycerol--prolipoprotein diacylglyceryl transferase of Streptococcus equi subsp. equi (strain 4047).